The following is a 434-amino-acid chain: ATP-sensitive inward rectifier potassium channel 14 (434 aa).

Residues 1-81 are Cytoplasmic-facing; it reads MGLARALRRL…LSDLFTTCVD (81 aa). An S-nitrosocysteine modification is found at C79. A helical membrane pass occupies residues 82–108; it reads VRWRWMCLLFSCSFLASWLLFGLTFWL. The Extracellular segment spans residues 109–131; sequence IASLHGDLAAPPPPAPCFSQVAS. The helical; Pore-forming intramembrane region spans 132 to 148; the sequence is FLAAFLFALETQTSIGY. The Selectivity filter signature appears at 145–150; that stretch reads SIGYGV. Over 149-157 the chain is Extracellular; the sequence is GVRSVTEEC. The helical transmembrane segment at 158 to 185 threads the bilayer; sequence PAAVAAVVLQCIAGCVLDAFVVGAVMAK. At 186–434 the chain is on the cytoplasmic side; sequence MAKPKKRNET…TPTLALTLPP (249 aa). The segment at 398–434 is disordered; it reads QEEDEEEDTKEGTSAETPERAASPQALTPTLALTLPP. Basic and acidic residues predominate over residues 407-416; that stretch reads KEGTSAETPE. Over residues 418-434 the composition is skewed to low complexity; sequence AASPQALTPTLALTLPP.

Belongs to the inward rectifier-type potassium channel (TC 1.A.2.1) family. KCNJ14 subfamily.

It localises to the membrane. It catalyses the reaction K(+)(in) = K(+)(out). With respect to regulation, channel activity is regulated by variations of cytosolic pH; channels are activated by alkaline and inhibited by acidic pH values. Inhibited by Ba(2+) and Cs(+) in a voltage-dependent manner; sensitivity to those inhibitors is lower than in other Kir channels. Functionally, inward rectifier potassium channels are characterized by a greater tendency to allow potassium to flow into the cell rather than out of it. Their voltage dependence is regulated by the concentration of extracellular potassium; as external potassium is raised, the voltage range of the channel opening shifts to more positive voltages. The chain is ATP-sensitive inward rectifier potassium channel 14 (Kcnj14) from Mus musculus (Mouse).